Consider the following 438-residue polypeptide: MDGVSNWPAPSTPTPVHATLTIPGSKSQTNRALVLAALATPQGTSTISGALRSRDTDLMIGALQTLGFDVESAGTDSDLRVGGGLGPAAGARVDCGLAGTVLRFLPPVAALSTETVEFDGDEQARARPIAPLLAGLQALGVRIDGDGLPFRVRGEGSVAGGTVEIDASASSQFVSGLMLSGALFRDGLTIVHTGESVPSAPHVAMTVSMLRDAGVEVDDTKTNRWTVRPGPVAARHWTIEPDLSNAVPFLSAGVVSGGAVRITGWPAVSTQPAGAIMAILEKVGAVVRQTESYLEVQGTRQYQGFDVDLHDVGELTPAVAALAAVATPGAVSRLRGVAHLRGHETDRLAALSAEINGLGGQCEETDDGLVITAAPLHGGVWHSYADHRMAMAGAIVGLRTPGVEIEDIATTAKTLPEFPQMWADMLAGQTATDPEAGA.

3-phosphoshikimate is bound by residues Lys26, Ser27, and Arg31. Lys26 contributes to the phosphoenolpyruvate binding site. Gly99 and Arg127 together coordinate phosphoenolpyruvate. Residues Ser170, Ser171, Gln172, Ser199, Glu314, and His343 each contribute to the 3-phosphoshikimate site. Gln172 contributes to the phosphoenolpyruvate binding site. Glu314 functions as the Proton acceptor in the catalytic mechanism. Phosphoenolpyruvate contacts are provided by Arg347, Arg388, and Lys413.

It belongs to the EPSP synthase family. As to quaternary structure, monomer.

It localises to the cytoplasm. The catalysed reaction is 3-phosphoshikimate + phosphoenolpyruvate = 5-O-(1-carboxyvinyl)-3-phosphoshikimate + phosphate. The protein operates within metabolic intermediate biosynthesis; chorismate biosynthesis; chorismate from D-erythrose 4-phosphate and phosphoenolpyruvate: step 6/7. Its function is as follows. Catalyzes the transfer of the enolpyruvyl moiety of phosphoenolpyruvate (PEP) to the 5-hydroxyl of shikimate-3-phosphate (S3P) to produce enolpyruvyl shikimate-3-phosphate and inorganic phosphate. The chain is 3-phosphoshikimate 1-carboxyvinyltransferase from Mycobacterium sp. (strain MCS).